The primary structure comprises 126 residues: Holo-[acyl-carrier-protein] synthase (126 aa).

Mg(2+)-binding residues include Asp9 and Glu58.

The protein belongs to the P-Pant transferase superfamily. AcpS family. Mg(2+) serves as cofactor.

It localises to the cytoplasm. It catalyses the reaction apo-[ACP] + CoA = holo-[ACP] + adenosine 3',5'-bisphosphate + H(+). In terms of biological role, transfers the 4'-phosphopantetheine moiety from coenzyme A to a Ser of acyl-carrier-protein. In Pectobacterium carotovorum subsp. carotovorum (strain PC1), this protein is Holo-[acyl-carrier-protein] synthase.